Consider the following 506-residue polypeptide: MKQILFMDTTLRDGEQSPGVNLNEQEKLQIARQLERLGIHVMEAGFAAASEGDFQSVKRIANTIQNATVMSLARAKESDIRRAYEAVKGAVSPRLHVFLATSDIHMKYKLCMSKEDVLDSIYRSVTLGKSLFPTVQFSAEDATRTARDFLAEAVEVAIRAGANVINIPDTVGYTNPEEYYALFKYLQESVPSYEKAIFSCHCHDDLGMAVANSLAAVEGGALQVEGTINGIGERAGNAALEEVAVALHIRKDFYKAEPSMTLKEIKATSTLVSRLTGMVVPKNKAIVGANAFAHESGIHQDGVLKEVTTYEIIEPALVGESQNLFVLGKHSGRHAFTEKMKELGYEFTNDERDAVFEAFKKLADRKKEITEEDLRALMLGEAAFAAQQYNITQLQVHFVSNSTQCATVVLKDEEGNVFEDAATGSGSIEAIYNAIQRILGLECELADYRIQSITQGQDALAHVHVELKEGAHQVSGFGVAQDVLEASARAYVHAAGKLKSFIQLVK.

Residues 4–266 (ILFMDTTLRD…EPSMTLKEIK (263 aa)) form the Pyruvate carboxyltransferase domain. 4 residues coordinate Mn(2+): Asp-13, His-201, His-203, and Asn-237. Residues 390–506 (NITQLQVHFV…KLKSFIQLVK (117 aa)) form a regulatory domain region.

This sequence belongs to the alpha-IPM synthase/homocitrate synthase family. LeuA type 1 subfamily. As to quaternary structure, homodimer. Mn(2+) serves as cofactor.

The protein resides in the cytoplasm. It catalyses the reaction 3-methyl-2-oxobutanoate + acetyl-CoA + H2O = (2S)-2-isopropylmalate + CoA + H(+). Its pathway is amino-acid biosynthesis; L-leucine biosynthesis; L-leucine from 3-methyl-2-oxobutanoate: step 1/4. Its function is as follows. Catalyzes the condensation of the acetyl group of acetyl-CoA with 3-methyl-2-oxobutanoate (2-ketoisovalerate) to form 3-carboxy-3-hydroxy-4-methylpentanoate (2-isopropylmalate). This Bacillus cereus (strain AH820) protein is 2-isopropylmalate synthase.